A 524-amino-acid polypeptide reads, in one-letter code: Peptide chain release factor 3 (524 aa).

Positions 10–278 constitute a tr-type G domain; sequence DSRRTFAIIS…TFLQFAPAPH (269 aa). Residues 19–26, 87–91, and 141–144 each bind GTP; these read SHPDAGKT, DTPGH, and NKLD.

Belongs to the TRAFAC class translation factor GTPase superfamily. Classic translation factor GTPase family. PrfC subfamily.

It is found in the cytoplasm. Its function is as follows. Increases the formation of ribosomal termination complexes and stimulates activities of RF-1 and RF-2. It binds guanine nucleotides and has strong preference for UGA stop codons. It may interact directly with the ribosome. The stimulation of RF-1 and RF-2 is significantly reduced by GTP and GDP, but not by GMP. The sequence is that of Peptide chain release factor 3 from Enterococcus faecalis (strain ATCC 700802 / V583).